Consider the following 289-residue polypeptide: MQGVYPAIITPLKENKVDYDGLRNNIDFLIENGVSGVIPVGTTGESPTLTPLEHEKVVEKVVEFVDGRVEVIAGTGSNSTSEALEFSQYAEDVGVDGVLLITPYYNKPTQEGLKRHFGEIANSINVPIVLYNVPSRTALNIEPETIKYLFNEYSNISAVKEANPNLSQVSEVLDSCDIDILSGNDELTLPIISLGGKGVVSVIANIAPKEFVQMVDFANAGKFDKAKEIHYKLFPLMKLMFVETNPIPIKTAMNMLGMPSGELRLPLCEMAESNKLKLQNALNNLGLLK.

Residue Thr-43 coordinates pyruvate. Residue Tyr-131 is the Proton donor/acceptor of the active site. Residue Lys-160 is the Schiff-base intermediate with substrate of the active site. Val-200 contacts pyruvate.

It belongs to the DapA family. As to quaternary structure, homotetramer; dimer of dimers.

The protein resides in the cytoplasm. The catalysed reaction is L-aspartate 4-semialdehyde + pyruvate = (2S,4S)-4-hydroxy-2,3,4,5-tetrahydrodipicolinate + H2O + H(+). It participates in amino-acid biosynthesis; L-lysine biosynthesis via DAP pathway; (S)-tetrahydrodipicolinate from L-aspartate: step 3/4. Catalyzes the condensation of (S)-aspartate-beta-semialdehyde [(S)-ASA] and pyruvate to 4-hydroxy-tetrahydrodipicolinate (HTPA). The sequence is that of 4-hydroxy-tetrahydrodipicolinate synthase from Methanococcus maripaludis (strain DSM 14266 / JCM 13030 / NBRC 101832 / S2 / LL).